A 396-amino-acid chain; its full sequence is Elongation factor Tu (396 aa).

The tr-type G domain maps to 10 to 205 (KSHANIGTIG…AVDEYIPTPE (196 aa)). The interval 19 to 26 (GHVDHGKT) is G1. 19–26 (GHVDHGKT) lines the GTP pocket. Residue Thr26 coordinates Mg(2+). The G2 stretch occupies residues 61 to 65 (GITIS). The segment at 82–85 (DCPG) is G3. Residues 82 to 86 (DCPGH) and 137 to 140 (NKCD) contribute to the GTP site. A G4 region spans residues 137–140 (NKCD). Residues 175–177 (SAL) form a G5 region.

The protein belongs to the TRAFAC class translation factor GTPase superfamily. Classic translation factor GTPase family. EF-Tu/EF-1A subfamily. In terms of assembly, monomer.

Its subcellular location is the cytoplasm. It carries out the reaction GTP + H2O = GDP + phosphate + H(+). In terms of biological role, GTP hydrolase that promotes the GTP-dependent binding of aminoacyl-tRNA to the A-site of ribosomes during protein biosynthesis. This chain is Elongation factor Tu, found in Bacillus velezensis (strain DSM 23117 / BGSC 10A6 / LMG 26770 / FZB42) (Bacillus amyloliquefaciens subsp. plantarum).